The following is a 195-amino-acid chain: Putative lysine exporter (195 aa).

6 consecutive transmembrane segments (helical) span residues 4 to 24, 30 to 50, 61 to 81, 86 to 106, 117 to 137, and 170 to 190; these read LLSA…WLHF, LYVL…NGIS, LMMG…SAFF, ITQG…SVVL, IAFF…PLFM, and PIAI…LVFF.

Belongs to the LysO family.

The protein localises to the cell inner membrane. Its function is as follows. Mediates export of lysine. This Haemophilus influenzae (strain ATCC 51907 / DSM 11121 / KW20 / Rd) protein is Putative lysine exporter.